The sequence spans 556 residues: Double-strand-break repair protein rad21-like protein 1 (556 aa).

It belongs to the rad21 family. As to quaternary structure, component of some meiotic cohesin complex composed of the SMC1 (SMC1A or SMC1B) and SMC3 heterodimer attached via their hinge domain, RAD21L which link them, and STAG3.

The protein localises to the nucleus. It localises to the chromosome. Functionally, meiosis-specific component of some cohesin complex required during the initial steps of prophase I in male meiosis. Probably required during early meiosis in males for separation of sister chromatids and homologous chromosomes. Replaces RAD21 in premeiotic S phase (during early stages of prophase I), while RAD21 reappears in later stages of prophase I. Involved in synaptonemal complex assembly, synapsis initiation and crossover recombination between homologous chromosomes during prophase I. The chain is Double-strand-break repair protein rad21-like protein 1 (RAD21L1) from Homo sapiens (Human).